Consider the following 353-residue polypeptide: WD repeat-containing protein 55 (353 aa).

WD repeat units lie at residues 4–43 (DLGA…SLVR), 49–88 (AHKE…QVAH), 92–130 (AHED…CSHE), 133–172 (AHED…VQSQ), 175–214 (FSED…DCSD), 218–257 (DLAP…IIQP), and 260–299 (SHDY…EGSN). The segment at 300-353 (VNSGNASGAAEDSDSDNDGMDLDNDPSKSSKGSKRKTKSKANTLNATNNFFADL) is disordered. Over residues 310–323 (EDSDSDNDGMDLDN) the composition is skewed to acidic residues. Low complexity predominate over residues 339–353 (KANTLNATNNFFADL).

The protein belongs to the WD repeat WDR55 family. In terms of assembly, interacts with DDB1A. In terms of tissue distribution, highly expressed in roots. Expressed in cotyledons, leaves, buds and flowers.

The protein resides in the nucleus. It is found in the cytoplasm. Functionally, required for male and female gametogenesis, seed development, and embryo and endosperm development at early stages. Involved in the establishment of bilateral symmetry in the transition from the globular to the heart embryo stage. May act in the frame of a CRL4 complex. Required for proper vegetative growth and organization of the adult plant body. May play a role in hormonal control of plant development. The polypeptide is WD repeat-containing protein 55 (Arabidopsis thaliana (Mouse-ear cress)).